The sequence spans 318 residues: Transaldolase (318 aa).

Lys-132 functions as the Schiff-base intermediate with substrate in the catalytic mechanism.

It belongs to the transaldolase family. Type 1 subfamily. As to quaternary structure, homodimer.

It localises to the cytoplasm. The catalysed reaction is D-sedoheptulose 7-phosphate + D-glyceraldehyde 3-phosphate = D-erythrose 4-phosphate + beta-D-fructose 6-phosphate. Its pathway is carbohydrate degradation; pentose phosphate pathway; D-glyceraldehyde 3-phosphate and beta-D-fructose 6-phosphate from D-ribose 5-phosphate and D-xylulose 5-phosphate (non-oxidative stage): step 2/3. In terms of biological role, transaldolase is important for the balance of metabolites in the pentose-phosphate pathway. The chain is Transaldolase from Allorhizobium ampelinum (strain ATCC BAA-846 / DSM 112012 / S4) (Agrobacterium vitis (strain S4)).